Here is a 279-residue protein sequence, read N- to C-terminus: Vomeronasal type-1 receptor A8 (279 aa).

Residues 1-19 (MNKDHTLYCSVYIRNAFFS) lie on the Extracellular side of the membrane. Residues 20–40 (EIGIGISANSCLLLFHTFMFI) form a helical membrane-spanning segment. The Cytoplasmic portion of the chain corresponds to 41-49 (RGHRPRLTD). A helical transmembrane segment spans residues 50-70 (LPIGFVALIHLVMLLLAAYIT). The Extracellular portion of the chain corresponds to 71-93 (EDFFMSSGGWDDITCKLVIFLHR). Cys85 and Cys172 are disulfide-bonded. A helical transmembrane segment spans residues 94–114 (FFRSLSVCATCLLSVFQAIIL). Over 115 to 134 (CPQSSHLAKLKQNSPHQLSY) the chain is Cytoplasmic. A helical membrane pass occupies residues 135–155 (FFIFLSIFYTSISSQILIAAI). Residues 156 to 159 (PTQN) are Extracellular-facing. N-linked (GlcNAc...) asparagine glycosylation is present at Asn159. The chain crosses the membrane as a helical span at residues 160–180 (ITFVNLIYITNSCSFLPLSSS). Residues 181 to 187 (MQHTFST) are Cytoplasmic-facing. A helical membrane pass occupies residues 188–208 (LLTFRNVFVIGLMGLSTCYMA). Residues 209-238 (TLLCRHKTRSQRLQNSKLSPKATPEQRALR) lie on the Extracellular side of the membrane. A helical transmembrane segment spans residues 239–259 (TILMLMSFFLLMSTFDSIISY). Residues 260 to 279 (SRTIITGKSTALLCPDSCRS) are Cytoplasmic-facing.

The protein belongs to the G-protein coupled receptor 1 family. In terms of tissue distribution, expressed in a subset of sensory neurons located in the apical layer of the vomeronasal organ.

The protein localises to the cell membrane. Its function is as follows. Putative pheromone receptor implicated in the regulation of social and reproductive behavior. The sequence is that of Vomeronasal type-1 receptor A8 from Mus musculus (Mouse).